The chain runs to 95 residues: MAFTIQPRQSLIVYTYSLKQTRQLKRYGTVMYVSKKMRYVVLYVNREDVTKLTDQLTHLRFVKRVVASSRPTINETFNGVAAEMVTTTETEDDDE.

Belongs to the UPF0298 family.

The protein localises to the cytoplasm. This chain is UPF0298 protein LVIS_1401, found in Levilactobacillus brevis (strain ATCC 367 / BCRC 12310 / CIP 105137 / JCM 1170 / LMG 11437 / NCIMB 947 / NCTC 947) (Lactobacillus brevis).